A 300-amino-acid polypeptide reads, in one-letter code: GTPase Era (300 aa).

Residues 8–176 (RCGYVAIVGR…EAQIAKHLPE (169 aa)) form the Era-type G domain. The tract at residues 16-23 (GRPNVGKS) is G1. Residue 16 to 23 (GRPNVGKS) coordinates GTP. The segment at 42-46 (QTTRH) is G2. Positions 63–66 (DTPG) are G3. Residues 63–67 (DTPGM) and 125–128 (NKTD) contribute to the GTP site. The G4 stretch occupies residues 125-128 (NKTD). Residues 155–157 (ISA) form a G5 region. Positions 199–283 (VREKIMRQLG…MLNLWVKVKG (85 aa)) constitute a KH type-2 domain.

This sequence belongs to the TRAFAC class TrmE-Era-EngA-EngB-Septin-like GTPase superfamily. Era GTPase family. Monomer.

The protein localises to the cytoplasm. The protein resides in the cell inner membrane. Its function is as follows. An essential GTPase that binds both GDP and GTP, with rapid nucleotide exchange. Plays a role in 16S rRNA processing and 30S ribosomal subunit biogenesis and possibly also in cell cycle regulation and energy metabolism. This Pseudomonas putida (strain ATCC 700007 / DSM 6899 / JCM 31910 / BCRC 17059 / LMG 24140 / F1) protein is GTPase Era.